We begin with the raw amino-acid sequence, 209 residues long: Probable phosphatidylglycerophosphatase, mitochondrial (209 aa).

Residues 57–61 (DKDNC) carry the Phosphoryl acceptor motif.

This sequence belongs to the GEP4 family.

Its subcellular location is the mitochondrion inner membrane. It catalyses the reaction a 1,2-diacyl-sn-glycero-3-phospho-(1'-sn-glycero-3'-phosphate) + H2O = a 1,2-diacyl-sn-glycero-3-phospho-(1'-sn-glycerol) + phosphate. The protein operates within phospholipid metabolism; phosphatidylglycerol biosynthesis; phosphatidylglycerol from CDP-diacylglycerol: step 2/2. Functionally, phosphatidylglycerophosphatase involved in the biosynthesis of cardiolipin (CL), a unique dimeric phosphoglycerolipid predominantly present in mitochondrial membranes and which has important functions for cellular energy metabolism, mitochondrial dynamics and the initiation of apoptotic pathways. This Schizosaccharomyces pombe (strain 972 / ATCC 24843) (Fission yeast) protein is Probable phosphatidylglycerophosphatase, mitochondrial (gep4).